We begin with the raw amino-acid sequence, 53 residues long: UPF0337 protein LJ_0034.1 (53 aa).

Residues 27–53 (AREVEGKAQQAKGKVKSKATEVKEDLE) are disordered. A compositionally biased stretch (basic and acidic residues) spans 44-53 (KATEVKEDLE).

The protein belongs to the UPF0337 (CsbD) family.

The protein is UPF0337 protein LJ_0034.1 of Lactobacillus johnsonii (strain CNCM I-12250 / La1 / NCC 533).